Consider the following 162-residue polypeptide: Peptide deformylase-like (162 aa).

It belongs to the polypeptide deformylase family.

This chain is Peptide deformylase-like, found in Staphylococcus epidermidis (strain ATCC 35984 / DSM 28319 / BCRC 17069 / CCUG 31568 / BM 3577 / RP62A).